A 119-amino-acid polypeptide reads, in one-letter code: Large ribosomal subunit protein uL14 (119 aa).

This sequence belongs to the universal ribosomal protein uL14 family. As to quaternary structure, part of the 50S ribosomal subunit. Forms a cluster with proteins L3 and L19. In the 70S ribosome, L14 and L19 interact and together make contacts with the 16S rRNA in bridges B5 and B8.

In terms of biological role, binds to 23S rRNA. Forms part of two intersubunit bridges in the 70S ribosome. In Ehrlichia ruminantium (strain Gardel), this protein is Large ribosomal subunit protein uL14.